A 226-amino-acid chain; its full sequence is 7-cyano-7-deazaguanine synthase (226 aa).

10-20 serves as a coordination point for ATP; the sequence is FSGGQDSTTLA. Residues cysteine 190, cysteine 205, cysteine 208, and cysteine 211 each contribute to the Zn(2+) site.

It belongs to the QueC family. Zn(2+) serves as cofactor.

The enzyme catalyses 7-carboxy-7-deazaguanine + NH4(+) + ATP = 7-cyano-7-deazaguanine + ADP + phosphate + H2O + H(+). Its pathway is purine metabolism; 7-cyano-7-deazaguanine biosynthesis. Its function is as follows. Catalyzes the ATP-dependent conversion of 7-carboxy-7-deazaguanine (CDG) to 7-cyano-7-deazaguanine (preQ(0)). This is 7-cyano-7-deazaguanine synthase from Helicobacter pylori (strain Shi470).